The primary structure comprises 263 residues: Exosome complex component Rrp4 (263 aa).

The S1 motif domain occupies 51-127; that stretch reads GKYIPSRKDF…KAMKVELSMR (77 aa). The region spanning 135 to 196 is the KH domain; sequence SKGRIIEVVP…DRLTTAIEMI (62 aa). Positions 213–263 are disordered; the sequence is LRGEPEGTEGSDEEQLVDEEVAGVSLEDDDVTEETSRKVDVLLDNDTDETN. Residues 218-245 show a composition bias toward acidic residues; sequence EGTEGSDEEQLVDEEVAGVSLEDDDVTE.

It belongs to the RRP4 family. As to quaternary structure, component of the archaeal exosome complex. Forms a trimer of Rrp4 and/or Csl4 subunits. The trimer associates with a hexameric ring-like arrangement composed of 3 Rrp41-Rrp42 heterodimers.

The protein resides in the cytoplasm. In terms of biological role, non-catalytic component of the exosome, which is a complex involved in RNA degradation. Increases the RNA binding and the efficiency of RNA degradation. Confers strong poly(A) specificity to the exosome. The protein is Exosome complex component Rrp4 of Methanococcoides burtonii (strain DSM 6242 / NBRC 107633 / OCM 468 / ACE-M).